Consider the following 127-residue polypeptide: Large ribosomal subunit protein bL17 (127 aa).

The protein belongs to the bacterial ribosomal protein bL17 family. As to quaternary structure, part of the 50S ribosomal subunit. Contacts protein L32.

The polypeptide is Large ribosomal subunit protein bL17 (Limosilactobacillus reuteri (strain DSM 20016) (Lactobacillus reuteri)).